Reading from the N-terminus, the 386-residue chain is Putative 8-amino-7-oxononanoate synthase (386 aa).

R22 provides a ligand contact to substrate. Residue 109–110 participates in pyridoxal 5'-phosphate binding; the sequence is GY. Substrate is bound at residue H134. Pyridoxal 5'-phosphate-binding positions include S182, 207–210, and 238–241; these read DEAH and TLSK. Position 241 is an N6-(pyridoxal phosphate)lysine (K241). T356 serves as a coordination point for substrate.

The protein belongs to the class-II pyridoxal-phosphate-dependent aminotransferase family. BioF subfamily. Homodimer. The cofactor is pyridoxal 5'-phosphate.

The catalysed reaction is 6-carboxyhexanoyl-[ACP] + L-alanine + H(+) = (8S)-8-amino-7-oxononanoate + holo-[ACP] + CO2. The protein operates within cofactor biosynthesis; biotin biosynthesis. Its function is as follows. Catalyzes the decarboxylative condensation of pimeloyl-[acyl-carrier protein] and L-alanine to produce 8-amino-7-oxononanoate (AON), [acyl-carrier protein], and carbon dioxide. The polypeptide is Putative 8-amino-7-oxononanoate synthase (bioF) (Nostoc sp. (strain PCC 7120 / SAG 25.82 / UTEX 2576)).